Reading from the N-terminus, the 470-residue chain is 6-phosphofructo-2-kinase/fructose-2,6-bisphosphatase (470 aa).

Residues 1 to 249 (MADRLRELTQ…VYYLMNIHVT (249 aa)) are 6-phosphofructo-2-kinase. Serine 31 carries the phosphoserine; by PKA modification. An ATP-binding site is contributed by 47 to 55 (GLPARGKTY). Beta-D-fructose 6-phosphate contacts are provided by arginine 80 and arginine 104. Aspartate 130 is an active-site residue. 2 residues coordinate beta-D-fructose 6-phosphate: threonine 132 and arginine 138. Cysteine 160 is a catalytic residue. 169 to 174 (NITQVK) serves as a coordination point for ATP. Beta-D-fructose 6-phosphate-binding residues include lysine 174, arginine 195, and tyrosine 199. Residues 250 to 470 (PRSIYLSRHG…EALDTVPEHF (221 aa)) form a fructose-2,6-bisphosphatase region. A beta-D-fructose 2,6-bisphosphate-binding site is contributed by arginine 257. The active-site Tele-phosphohistidine intermediate is the histidine 258. Beta-D-fructose 2,6-bisphosphate-binding residues include asparagine 264 and glycine 270. Glutamate 327 (proton donor/acceptor) is an active-site residue. Beta-D-fructose 2,6-bisphosphate contacts are provided by tyrosine 338, arginine 352, lysine 356, tyrosine 367, glutamine 393, and arginine 397. ATP is bound at residue 349–352 (FALR). Residues 393–397 (QAVMR) and tyrosine 429 contribute to the ATP site.

It in the C-terminal section; belongs to the phosphoglycerate mutase family. In terms of assembly, homodimer.

The enzyme catalyses beta-D-fructose 2,6-bisphosphate + H2O = beta-D-fructose 6-phosphate + phosphate. It catalyses the reaction beta-D-fructose 6-phosphate + ATP = beta-D-fructose 2,6-bisphosphate + ADP + H(+). With respect to regulation, phosphorylation results in inhibition of the kinase activity. In terms of biological role, synthesis and degradation of fructose 2,6-bisphosphate. The chain is 6-phosphofructo-2-kinase/fructose-2,6-bisphosphatase from Aquarana catesbeiana (American bullfrog).